A 606-amino-acid polypeptide reads, in one-letter code: V-type proton ATPase catalytic subunit A (606 aa).

Ala-2 bears the N-acetylalanine mark. 240 to 247 lines the ATP pocket; it reads AFGCGKTV.

The protein belongs to the ATPase alpha/beta chains family. As to quaternary structure, V-ATPase is a heteromultimeric enzyme made up of two complexes: the ATP-hydrolytic V1 complex and the proton translocation V0 complex. The V1 complex consists of three catalytic AB heterodimers that form a heterohexamer, three peripheral stalks each consisting of EG heterodimers, one central rotor including subunits D and F, and the regulatory subunits C and H. The proton translocation complex V0 consists of the proton transport subunit a, a ring of proteolipid subunits c9c'', rotary subunit d, subunits e and f, and the accessory subunits vah-19/Ac45 and vah-20/PRR. In terms of tissue distribution, expressed in proximal but not distal germ cells.

The catalysed reaction is ATP + H2O + 4 H(+)(in) = ADP + phosphate + 5 H(+)(out). ATP hydrolysis occurs at the interface between the nucleotide-binding domains of subunits A and B. ATP hydrolysis triggers a conformational change in the subunits D and F, which induces a shift of subunit d. The c-ring is subsequently rotated and results in a continuous proton translocation across the membrane. Catalytic subunit of the V1 complex of vacuolar(H+)-ATPase (V-ATPase), a multisubunit enzyme composed of a peripheral complex (V1) that hydrolyzes ATP and a membrane integral complex (V0) that translocates protons. V-ATPase is responsible for acidifying and maintaining the pH of intracellular compartments and in some cell types, is targeted to the plasma membrane, where it is responsible for acidifying the extracellular environment. Required along with other vacuolar ATPase components for the removal of protein aggregates which form in immature oocytes in the distal gonad. This removal occurs as the oocytes mature and move to the proximal gonad, is triggered by the introduction of sperm through mating and occurs before fertilization. The introduction of sperm triggers V-ATPase accumulation in proximal oocytes and induces lysosomal acidification which leads to engulfing of protein aggregates by lysosomes and subsequent clearance of the aggregates. Lysosomal acidification also leads to changes in mitochondrial morphology and function. Mitochondria in distal immature oocytes are fragmented, produce high levels of reactive oxygen species (ROS) and have high membrane potential, indicative of metabolic inactivity. In contrast, mitochondria in proximal mature oocytes are tubular with lower ROS levels and membrane potential, indicative of an active metabolic state required for aggregate mobilization before clearance. Involved in receptor-mediated endocytosis. The polypeptide is V-type proton ATPase catalytic subunit A (Caenorhabditis elegans).